Reading from the N-terminus, the 319-residue chain is 4-hydroxy-3-methylbut-2-enyl diphosphate reductase (319 aa).

Residue cysteine 18 participates in [4Fe-4S] cluster binding. The (2E)-4-hydroxy-3-methylbut-2-enyl diphosphate site is built by histidine 47 and histidine 81. Dimethylallyl diphosphate is bound by residues histidine 47 and histidine 81. Residues histidine 47 and histidine 81 each contribute to the isopentenyl diphosphate site. Residue cysteine 103 coordinates [4Fe-4S] cluster. Histidine 131 is a (2E)-4-hydroxy-3-methylbut-2-enyl diphosphate binding site. Histidine 131 is a dimethylallyl diphosphate binding site. Residue histidine 131 coordinates isopentenyl diphosphate. Glutamate 133 (proton donor) is an active-site residue. Threonine 172 is a (2E)-4-hydroxy-3-methylbut-2-enyl diphosphate binding site. Cysteine 202 contacts [4Fe-4S] cluster. (2E)-4-hydroxy-3-methylbut-2-enyl diphosphate contacts are provided by serine 230, serine 231, asparagine 232, and serine 275. Dimethylallyl diphosphate-binding residues include serine 230, serine 231, asparagine 232, and serine 275. Isopentenyl diphosphate contacts are provided by serine 230, serine 231, asparagine 232, and serine 275.

The protein belongs to the IspH family. [4Fe-4S] cluster is required as a cofactor.

It catalyses the reaction isopentenyl diphosphate + 2 oxidized [2Fe-2S]-[ferredoxin] + H2O = (2E)-4-hydroxy-3-methylbut-2-enyl diphosphate + 2 reduced [2Fe-2S]-[ferredoxin] + 2 H(+). The catalysed reaction is dimethylallyl diphosphate + 2 oxidized [2Fe-2S]-[ferredoxin] + H2O = (2E)-4-hydroxy-3-methylbut-2-enyl diphosphate + 2 reduced [2Fe-2S]-[ferredoxin] + 2 H(+). Its pathway is isoprenoid biosynthesis; dimethylallyl diphosphate biosynthesis; dimethylallyl diphosphate from (2E)-4-hydroxy-3-methylbutenyl diphosphate: step 1/1. The protein operates within isoprenoid biosynthesis; isopentenyl diphosphate biosynthesis via DXP pathway; isopentenyl diphosphate from 1-deoxy-D-xylulose 5-phosphate: step 6/6. In terms of biological role, catalyzes the conversion of 1-hydroxy-2-methyl-2-(E)-butenyl 4-diphosphate (HMBPP) into a mixture of isopentenyl diphosphate (IPP) and dimethylallyl diphosphate (DMAPP). Acts in the terminal step of the DOXP/MEP pathway for isoprenoid precursor biosynthesis. In Methylocella silvestris (strain DSM 15510 / CIP 108128 / LMG 27833 / NCIMB 13906 / BL2), this protein is 4-hydroxy-3-methylbut-2-enyl diphosphate reductase.